The following is a 317-amino-acid chain: 4-hydroxy-3-methylbut-2-enyl diphosphate reductase (317 aa).

[4Fe-4S] cluster is bound at residue Cys12. His41 and His74 together coordinate (2E)-4-hydroxy-3-methylbut-2-enyl diphosphate. Dimethylallyl diphosphate-binding residues include His41 and His74. Isopentenyl diphosphate is bound by residues His41 and His74. Cys96 provides a ligand contact to [4Fe-4S] cluster. His124 lines the (2E)-4-hydroxy-3-methylbut-2-enyl diphosphate pocket. His124 contributes to the dimethylallyl diphosphate binding site. Residue His124 participates in isopentenyl diphosphate binding. The active-site Proton donor is the Glu126. (2E)-4-hydroxy-3-methylbut-2-enyl diphosphate is bound at residue Thr168. Cys198 contributes to the [4Fe-4S] cluster binding site. The (2E)-4-hydroxy-3-methylbut-2-enyl diphosphate site is built by Ser226, Ser227, Asn228, and Ser270. Dimethylallyl diphosphate is bound by residues Ser226, Ser227, Asn228, and Ser270. Isopentenyl diphosphate is bound by residues Ser226, Ser227, Asn228, and Ser270.

The protein belongs to the IspH family. The cofactor is [4Fe-4S] cluster.

The enzyme catalyses isopentenyl diphosphate + 2 oxidized [2Fe-2S]-[ferredoxin] + H2O = (2E)-4-hydroxy-3-methylbut-2-enyl diphosphate + 2 reduced [2Fe-2S]-[ferredoxin] + 2 H(+). It catalyses the reaction dimethylallyl diphosphate + 2 oxidized [2Fe-2S]-[ferredoxin] + H2O = (2E)-4-hydroxy-3-methylbut-2-enyl diphosphate + 2 reduced [2Fe-2S]-[ferredoxin] + 2 H(+). It participates in isoprenoid biosynthesis; dimethylallyl diphosphate biosynthesis; dimethylallyl diphosphate from (2E)-4-hydroxy-3-methylbutenyl diphosphate: step 1/1. It functions in the pathway isoprenoid biosynthesis; isopentenyl diphosphate biosynthesis via DXP pathway; isopentenyl diphosphate from 1-deoxy-D-xylulose 5-phosphate: step 6/6. In terms of biological role, catalyzes the conversion of 1-hydroxy-2-methyl-2-(E)-butenyl 4-diphosphate (HMBPP) into a mixture of isopentenyl diphosphate (IPP) and dimethylallyl diphosphate (DMAPP). Acts in the terminal step of the DOXP/MEP pathway for isoprenoid precursor biosynthesis. The protein is 4-hydroxy-3-methylbut-2-enyl diphosphate reductase of Chromohalobacter salexigens (strain ATCC BAA-138 / DSM 3043 / CIP 106854 / NCIMB 13768 / 1H11).